Reading from the N-terminus, the 213-residue chain is Protein Syd (213 aa).

The protein belongs to the Syd family.

Its subcellular location is the cell inner membrane. Interacts with the SecY protein in vivo. May bind preferentially to an uncomplexed state of SecY, thus functioning either as a chelating agent for excess SecY in the cell or as a regulatory factor that negatively controls the translocase function. The polypeptide is Protein Syd (Shewanella halifaxensis (strain HAW-EB4)).